We begin with the raw amino-acid sequence, 159 residues long: Cystatin-9 (159 aa).

Residues 1-28 (MSSPQRRKAMPWALSLLLMGFQLLVTYA) form the signal peptide.

Belongs to the cystatin family. In terms of tissue distribution, expressed in heart, placenta, lung, liver, skeletal muscle and pancreas. Not expressed in brain. Expressed in epididymis, kidney, testis, spinal cord, and thymus with a strong expression in epididymis and kidney and a weak expression in the spinal cord and thymus.

The protein localises to the secreted. Its function is as follows. May be involved in testis development. May play a role in hematopoietic differentiation or inflammation. Has immunomodulatory and antimicrobial functions against Francisella tularensis, a Gram-negative bacteria. In Homo sapiens (Human), this protein is Cystatin-9 (CST9).